The sequence spans 1213 residues: DNA-directed RNA polymerase subunit beta' (1213 aa).

The Zn(2+) site is built by Cys-60, Cys-62, Cys-75, and Cys-78. Residues Asp-450, Asp-452, and Asp-454 each coordinate Mg(2+). Zn(2+)-binding residues include Cys-819, Cys-893, Cys-900, and Cys-903.

This sequence belongs to the RNA polymerase beta' chain family. The RNAP catalytic core consists of 2 alpha, 1 beta, 1 beta' and 1 omega subunit. When a sigma factor is associated with the core the holoenzyme is formed, which can initiate transcription. Mg(2+) is required as a cofactor. The cofactor is Zn(2+).

It carries out the reaction RNA(n) + a ribonucleoside 5'-triphosphate = RNA(n+1) + diphosphate. Functionally, DNA-dependent RNA polymerase catalyzes the transcription of DNA into RNA using the four ribonucleoside triphosphates as substrates. In Streptococcus pyogenes serotype M6 (strain ATCC BAA-946 / MGAS10394), this protein is DNA-directed RNA polymerase subunit beta'.